Here is a 245-residue protein sequence, read N- to C-terminus: Ribonuclease 3 (245 aa).

One can recognise an RNase III domain in the interval 19-148; the sequence is FKVFQEKIGI…FIGALYLDQG (130 aa). A Mg(2+)-binding site is contributed by Glu-61. Asp-65 is an active-site residue. Mg(2+) contacts are provided by Asp-134 and Glu-137. Glu-137 is an active-site residue. The region spanning 174-243 is the DRBM domain; that stretch reads DYKSQLQELI…AAEALKKLKE (70 aa).

The protein belongs to the ribonuclease III family. As to quaternary structure, homodimer. Mg(2+) is required as a cofactor.

The protein resides in the cytoplasm. The catalysed reaction is Endonucleolytic cleavage to 5'-phosphomonoester.. Digests double-stranded RNA. Involved in the processing of primary rRNA transcript to yield the immediate precursors to the large and small rRNAs (23S and 16S). Processes some mRNAs, and tRNAs when they are encoded in the rRNA operon. Processes pre-crRNA and tracrRNA of type II CRISPR loci if present in the organism. In Bacillus cereus (strain AH187), this protein is Ribonuclease 3.